The following is a 66-amino-acid chain: Toxin BeM14 (66 aa).

Residues 2–66 (RDAYIADDRN…IRKIPGEECR (65 aa)) enclose the LCN-type CS-alpha/beta domain. Intrachain disulfides connect cysteine 12/cysteine 65, cysteine 16/cysteine 36, cysteine 22/cysteine 46, and cysteine 26/cysteine 48.

The protein belongs to the long (4 C-C) scorpion toxin superfamily. Sodium channel inhibitor family. Alpha subfamily. Expressed by the venom gland.

The protein localises to the secreted. In terms of biological role, alpha toxins bind voltage-independently at site-3 of sodium channels (Nav) and inhibit the inactivation of the activated channels, thereby blocking neuronal transmission. Has paralytic activity in mice. The polypeptide is Toxin BeM14 (Mesobuthus eupeus (Lesser Asian scorpion)).